The sequence spans 74 residues: Exodeoxyribonuclease 7 small subunit (74 aa).

This sequence belongs to the XseB family. As to quaternary structure, heterooligomer composed of large and small subunits.

It is found in the cytoplasm. The catalysed reaction is Exonucleolytic cleavage in either 5'- to 3'- or 3'- to 5'-direction to yield nucleoside 5'-phosphates.. Functionally, bidirectionally degrades single-stranded DNA into large acid-insoluble oligonucleotides, which are then degraded further into small acid-soluble oligonucleotides. The protein is Exodeoxyribonuclease 7 small subunit of Glaesserella parasuis serovar 5 (strain SH0165) (Haemophilus parasuis).